We begin with the raw amino-acid sequence, 1959 residues long: Sodium channel protein type 10 subunit alpha (1959 aa).

Topologically, residues 1 to 125 (MEFPIGSVGT…FNLIRRTAIK (125 aa)) are cytoplasmic. Residues 30 to 53 (AHGAAKKARAKHGERKGQDEKPRP) form a disordered region. Positions 33–43 (AAKKARAKHGE) are enriched in basic residues. Over residues 44-53 (RKGQDEKPRP) the composition is skewed to basic and acidic residues. One copy of the I repeat lies at 116-404 (FNLIRRTAIK…VTMAYEEQNQ (289 aa)). A helical membrane pass occupies residues 126–149 (VSVHAWFSIFITITILFNCVCMTQ). Residues 150-154 (NDLPE) lie on the Extracellular side of the membrane. A helical transmembrane segment spans residues 155 to 174 (KIEYAFTVIYTFEALIKILA). The Cytoplasmic portion of the chain corresponds to 175–187 (RGFCLNEFTYLRD). The helical transmembrane segment at 188-206 (PWNWLDFSVITLAYVGAAI) threads the bilayer. The Extracellular portion of the chain corresponds to 207 to 212 (DLRGIS). A helical; Voltage-sensor transmembrane segment spans residues 213–232 (GLRTFRVLRALKTVSVIPGL). Residues 233 to 248 (KVIVGALIHSVRKLAD) lie on the Cytoplasmic side of the membrane. Residues 249-272 (VTILTVFCLSVFALVGLQLFKGNL) form a helical membrane-spanning segment. The Extracellular segment spans residues 273–340 (KNKCIKRSTD…PDFNYTSFDS (68 aa)). An intrachain disulfide couples C276 to C318. N-linked (GlcNAc...) asparagine glycosylation is found at N288, N311, and N334. Positions 341–365 (FAWAFLSLFRLMTQDSWERLYQQTL) form an intramembrane region, pore-forming. Residues 366–372 (RASGKMY) lie on the Extracellular side of the membrane. The helical transmembrane segment at 373–398 (MVFFVLVIFLGSFYLVNLILAVVTMA) threads the bilayer. The Cytoplasmic segment spans residues 399–659 (YEEQNQATIA…KWMKFKMVLF (261 aa)). Residues S440, S443, S466, and S478 each carry the phosphoserine modification. Disordered stretches follow at residues 442 to 484 (HSHN…YNQR) and 510 to 578 (SQDV…ELTT). The segment covering 475-484 (SPQSDPYNQR) has biased composition (polar residues). Residues 523-533 (GVFHGDHESHR) are compositionally biased toward basic and acidic residues. A phosphoserine mark is found at S612 and S615. The stretch at 647–911 (CCPKWMKFKM…EDDGEVNNLQ (265 aa)) is one II repeat. A helical membrane pass occupies residues 660-684 (ELVTDPFAELTITLCIVVNTIFMAM). Topologically, residues 685–695 (EHYPMTDAFDA) are extracellular. Residues 696 to 719 (MLQAGNIVFTVFFTMEMAFKIIAF) traverse the membrane as a helical segment. Residues 720–727 (DPYYYFQK) lie on the Cytoplasmic side of the membrane. The helical transmembrane segment at 728-747 (KWNVFDCVIVTVSLLELSIA) threads the bilayer. At 748 to 753 (KKGSLS) the chain is on the extracellular side. Residues 754 to 773 (VLRTFRLLRVFKLAKSWPTL) traverse the membrane as a helical; Voltage-sensor segment. Residues 774 to 789 (NTLIKIIGNSVGALGN) lie on the Cytoplasmic side of the membrane. Residues 790-810 (LTFILAIIVFIFALVGKQLLG) traverse the membrane as a helical segment. The Extracellular portion of the chain corresponds to 811–834 (EDYGCRKDGTALWNEGQLRWHMCD). The pore-forming intramembrane region spans 835–855 (FFHSFLVIFRILCGEWIENMW). Residues 856–864 (VCMQVSEKS) are Extracellular-facing. A disulfide bridge links C857 with C866. Residues 865–890 (ICLILFLTVMVLGNLVVLNLFIALLL) form a helical membrane-spanning segment. Residues 891 to 1149 (NSFSADNLTA…GWQVRKTCYR (259 aa)) lie on the Cytoplasmic side of the membrane. The segment covering 1004–1016 (GESDLDELEEDIE) has biased composition (acidic residues). Disordered regions lie at residues 1004 to 1034 (GESD…QQDQ) and 1071 to 1097 (ATPQ…PDPE). The III repeat unit spans residues 1142–1451 (QVRKTCYRIV…KKYYNAMKKL (310 aa)). A helical membrane pass occupies residues 1150–1173 (IVEHSWFESFIIFMILLSSGALAF). The Extracellular portion of the chain corresponds to 1174 to 1186 (EDNYLEQKPRVKS). The helical transmembrane segment at 1187 to 1212 (MLEYTDRVFTFIFVFEMLLKWVAYGF) threads the bilayer. Residues 1213 to 1218 (KKYFTN) lie on the Cytoplasmic side of the membrane. The helical transmembrane segment at 1219–1240 (AWCWLDFLIVNISLTSLIAKIL) threads the bilayer. Residues 1241-1244 (DYSD) lie on the Extracellular side of the membrane. Residues 1245–1266 (VASLKALRTLRALRPLRALSRF) form a helical; Voltage-sensor membrane-spanning segment. Topologically, residues 1267 to 1285 (EGMRVVVDALVGAIPSIMN) are cytoplasmic. A helical membrane pass occupies residues 1286–1313 (VLLVCLIFWLIFSIMGVNLFAGKFSRCI). Topologically, residues 1314-1355 (DTSNNPFSVVNSTIVNNKSECRNQNHTGHFFWVNVKVNFDNV) are extracellular. Residues 1356–1377 (AMGYLALLQVATFKGWMDIMYA) constitute an intramembrane region (pore-forming). The Extracellular portion of the chain corresponds to 1378-1393 (AVDSREINSQPQWEDN). Residues 1394–1420 (LYMYLYFVVFIIFGGFFTLNLFVGVII) traverse the membrane as a helical segment. At 1421–1473 (DNFNQQKKKLGGQDIFMTEEQKKYYNAMKKLGSKKPQKPIPRPLNKYQGFVFD) the chain is on the cytoplasmic side. The residue at position 1453 (S1453) is a Phosphoserine; by PKC. The IV repeat unit spans residues 1460-1759 (IPRPLNKYQG…WEKFDPEATQ (300 aa)). Residues 1474 to 1497 (IVTRQAFDIIIMVLICLNMITMMV) traverse the membrane as a helical segment. The Extracellular portion of the chain corresponds to 1498–1508 (ETDGQSEEKTK). Residues 1509–1532 (ILGRINQFFVAVFTGECVMKMFAL) traverse the membrane as a helical segment. Topologically, residues 1533–1538 (RQYYFT) are cytoplasmic. The helical transmembrane segment at 1539-1562 (NGWNVFDFIVVILSIGSLVFSAIL) threads the bilayer. Topologically, residues 1563–1574 (KSLESYFSPTLF) are extracellular. A helical; Voltage-sensor transmembrane segment spans residues 1575–1596 (RVIRLARIGRILRLIRAAKGIR). The Cytoplasmic portion of the chain corresponds to 1597–1611 (TLLFALMMSLPALFN). The chain crosses the membrane as a helical span at residues 1612-1634 (IGLLLFLVMFIYSIFGMASFANV). Over 1635-1648 (VEEAGIDDMFNFQT) the chain is Extracellular. Positions 1649 to 1671 (FGNSMLCLFQITTSAGWDGLLSP) form an intramembrane region, pore-forming. The Extracellular portion of the chain corresponds to 1672–1699 (ILNTGPPYCDPNLSNNNTSKGNCGSPTV). The chain crosses the membrane as a helical span at residues 1700–1724 (GIVFFTTYIIISFLIVVNMYIAVIL). The Cytoplasmic segment spans residues 1725 to 1959 (ENFNVATEES…SKEGDSPGPQ (235 aa)). One can recognise an IQ domain in the interval 1853 to 1882 (EDISATVIQKAYRSYVLQRSLTLSNPLRVP). The tract at residues 1901-1959 (ANDSGRLPDKSETTSATSFPPSYDSVTRGLSDRVNISTSNSMHNEDEVTSKEGDSPGPQ) is disordered. The span at 1943-1959 (HNEDEVTSKEGDSPGPQ) shows a compositional bias: basic and acidic residues.

Belongs to the sodium channel (TC 1.A.1.10) family. Nav1.8/SCN10A subfamily. The channel consists of an ion conducting pore forming alpha-subunit regulated by one or more associated auxiliary subunits SCN1B, SCN2B and SCN3B; electrophysiological properties may vary depending on the type of the associated beta subunits. Found in a number of complexes with PRX, DYNLT1 and PDZD2. Interacts with proteins such as FSTL1, PRX, DYNLT1, PDZD2, S100A10 and many others. Interacts with NEDD4 and NEDD4L. In terms of processing, ubiquitinated by NEDD4L; which promotes its endocytosis. Post-translationally, phosphorylation at Ser-1453 by PKC in a highly conserved cytoplasmic loop slows inactivation of the sodium channel and reduces peak sodium currents. Lacks the cysteine which covalently binds the conotoxin GVIIJ. This cysteine (position 816) is speculated in other sodium channel subunits alpha to be implied in covalent binding with the sodium channel subunit beta-2 or beta-4.

Its subcellular location is the cell membrane. It catalyses the reaction Na(+)(in) = Na(+)(out). Tetrodotoxin-resistant channel that mediates the voltage-dependent sodium ion permeability of excitable membranes. Assuming opened or closed conformations in response to the voltage difference across the membrane, the protein forms a sodium-selective channel through which sodium ions may pass in accordance with their electrochemical gradient. Plays a role in neuropathic pain mechanisms. This is Sodium channel protein type 10 subunit alpha (Scn10a) from Onychomys torridus (Southern grasshopper mouse).